A 359-amino-acid chain; its full sequence is DNA polymerase IV (359 aa).

Residues 7-188 (IIHIDMDAFY…IPIGKFFGVG (182 aa)) form the UmuC domain. Positions 11 and 106 each coordinate Mg(2+). Glutamate 107 is an active-site residue.

It belongs to the DNA polymerase type-Y family. Monomer. The cofactor is Mg(2+).

Its subcellular location is the cytoplasm. It carries out the reaction DNA(n) + a 2'-deoxyribonucleoside 5'-triphosphate = DNA(n+1) + diphosphate. Its function is as follows. Poorly processive, error-prone DNA polymerase involved in untargeted mutagenesis. Copies undamaged DNA at stalled replication forks, which arise in vivo from mismatched or misaligned primer ends. These misaligned primers can be extended by PolIV. Exhibits no 3'-5' exonuclease (proofreading) activity. May be involved in translesional synthesis, in conjunction with the beta clamp from PolIII. The chain is DNA polymerase IV from Clostridium perfringens (strain ATCC 13124 / DSM 756 / JCM 1290 / NCIMB 6125 / NCTC 8237 / Type A).